The primary structure comprises 552 residues: Dihydroxy-acid dehydratase (552 aa).

A Mg(2+)-binding site is contributed by Asp78. A [2Fe-2S] cluster-binding site is contributed by Cys119. Residues Asp120 and Lys121 each contribute to the Mg(2+) site. Position 121 is an N6-carboxylysine (Lys121). Position 191 (Cys191) interacts with [2Fe-2S] cluster. Glu442 provides a ligand contact to Mg(2+). The Proton acceptor role is filled by Ser468.

It belongs to the IlvD/Edd family. In terms of assembly, homodimer. [2Fe-2S] cluster is required as a cofactor. It depends on Mg(2+) as a cofactor.

It carries out the reaction (2R)-2,3-dihydroxy-3-methylbutanoate = 3-methyl-2-oxobutanoate + H2O. The enzyme catalyses (2R,3R)-2,3-dihydroxy-3-methylpentanoate = (S)-3-methyl-2-oxopentanoate + H2O. Its pathway is amino-acid biosynthesis; L-isoleucine biosynthesis; L-isoleucine from 2-oxobutanoate: step 3/4. It functions in the pathway amino-acid biosynthesis; L-valine biosynthesis; L-valine from pyruvate: step 3/4. Functionally, functions in the biosynthesis of branched-chain amino acids. Catalyzes the dehydration of (2R,3R)-2,3-dihydroxy-3-methylpentanoate (2,3-dihydroxy-3-methylvalerate) into 2-oxo-3-methylpentanoate (2-oxo-3-methylvalerate) and of (2R)-2,3-dihydroxy-3-methylbutanoate (2,3-dihydroxyisovalerate) into 2-oxo-3-methylbutanoate (2-oxoisovalerate), the penultimate precursor to L-isoleucine and L-valine, respectively. The protein is Dihydroxy-acid dehydratase of Caldicellulosiruptor saccharolyticus (strain ATCC 43494 / DSM 8903 / Tp8T 6331).